Reading from the N-terminus, the 410-residue chain is UBX domain-containing protein 3 (410 aa).

Disordered stretches follow at residues 46-139 and 154-212; these read EEDH…PDPK and TISP…EKPL. Residues 65 to 85 show a composition bias toward low complexity; sequence GSSSGISGGDQQPPRPLQRQQ. Residues 86 to 97 are compositionally biased toward polar residues; that stretch reads NTQGQGMKSGTA. Phosphoserine is present on residues S156, S167, and S186. A compositionally biased stretch (low complexity) spans 163–174; that stretch reads SGPSSLASSWAS. Residues 183–196 are compositionally biased toward polar residues; it reads NEASGSTTPVTQSG. T190 carries the post-translational modification Phosphothreonine. The 66-residue stretch at 211–276 folds into the SEP domain; the sequence is PLRRTLYFWR…VQHRMDEDYV (66 aa). One can recognise a UBX domain in the interval 334–410; sequence ENKPTTRIQV…KNASLVQKSL (77 aa).

As to quaternary structure, interacts with cdc48.

Its function is as follows. Involved in CDC48-dependent protein degradation through the ubiquitin/proteasome pathway. Involved in delivery of substrates to the 26S proteasome. Also required for membrane fusion and sporulation. The polypeptide is UBX domain-containing protein 3 (ubx3) (Schizosaccharomyces pombe (strain 972 / ATCC 24843) (Fission yeast)).